Reading from the N-terminus, the 608-residue chain is MKGRSDGGQKKRVIALVCVAAVVLVFVYLFYGSSDHRASAIEYGRKLGLGGDDDDTKQDDTSSSFGVDDGFTPRSFPVCDDRHSELIPCLDRNLIYQMRLKLDLSLMEHYERHCPPPERRFNCLIPPPNGYKVPIKWPKSRDEVWKVNIPHTHLAHEKSDQNWMVVKGDKINFPGGGTHFHYGADKYIASMANMLNYPNNVLNNGGRLRTVFDVGCGVASFGGYLLSSDILTMSLAPNDVHQNQIQFALERGIPASLGVLGTKRLPYPSRSFELSHCSRCRIDWLQRDGILLLELDRVLRPGGYFAYSSPEAYAQDEEDLRIWREMSALVERMCWKIAAKRNQTVIWQKPLTNDCYLEREPGTQPPLCRSDNDPDAVWGVNMEACITSYSDHDHKTKGSGLAPWPARLTSPPPRLADFGYSTGMFEKDTELWRQRVDTYWDLLSPRIESDTVRNIMDMKASMGSFAAALKEKDVWVMNVVPEDGPNTLKLIYDRGLMGAVHSWCEAFSTYPRTYDLLHAWDIISDIKKKGCSEVDLLLEMDRILRPSGFIIIRDKQRVVDFVKKYLKALHWEEVGTKTDSDSDQDSDNVVFIVQKKLWLTSESLRDME.

The Cytoplasmic portion of the chain corresponds to 1 to 12; that stretch reads MKGRSDGGQKKR. The chain crosses the membrane as a helical; Signal-anchor for type II membrane protein span at residues 13 to 33; it reads VIALVCVAAVVLVFVYLFYGS. Residues 34 to 608 are Lumenal-facing; that stretch reads SDHRASAIEY…LTSESLRDME (575 aa). N342 carries N-linked (GlcNAc...) asparagine glycosylation.

This sequence belongs to the methyltransferase superfamily.

The protein resides in the golgi apparatus membrane. The chain is Probable methyltransferase PMT3 from Arabidopsis thaliana (Mouse-ear cress).